A 344-amino-acid chain; its full sequence is MAPKEDSLALAEAWNHGFGFIKTSIVKTAVELGIPDILESRGAPVSIPELAAAVDCSADRLYRVMRFLAYHGIFKRTEPPPESTGGGSVYYAQTLVSRRLTRENLGPFVLLQGTMREPSGCVTAETLRMSKRPGLVDDNDSDRLYEDPVFSMKVFRDAMASHARMTTAAVIENYGEGFLGVGSLVDVGGSYGMALSMLVKAFPWLRGICFDLPEVVARASPLKGVEFVAGSMFESIPKADVVMLMFVLHNWSDEECVEILKRCKDAVPKNKGKVIIIDAVIDEDGNGDEFTGARLGLDVTMMANMFEGRERTYVEWAHIINEAGFRRHVVKNIKTLESVIEAYP.

D211 is an S-adenosyl-L-methionine binding site. H249 acts as the Proton acceptor in catalysis.

This sequence belongs to the class I-like SAM-binding methyltransferase superfamily. Cation-independent O-methyltransferase family. In terms of assembly, homodimer.

It catalyses the reaction scutellarein + S-adenosyl-L-methionine = scutellarein 7-methyl ether + S-adenosyl-L-homocysteine. It carries out the reaction 4',7,8-trihydroxyflavone + S-adenosyl-L-methionine = 4',8-dihydroxy-7-methoxyflavone + S-adenosyl-L-homocysteine. The catalysed reaction is isorhamnetin + S-adenosyl-L-methionine = rhamnacene + S-adenosyl-L-homocysteine + H(+). The enzyme catalyses kaempferol + S-adenosyl-L-methionine = kaempferol 7-methyl ether + S-adenosyl-L-homocysteine + H(+). It catalyses the reaction (2S)-naringenin + S-adenosyl-L-methionine = (2S)-sakuranetin + S-adenosyl-L-homocysteine + H(+). It carries out the reaction quercetin + S-adenosyl-L-methionine = rhamnetin + S-adenosyl-L-homocysteine + H(+). The catalysed reaction is apigenin + S-adenosyl-L-methionine = genkwanin + S-adenosyl-L-homocysteine + H(+). The enzyme catalyses luteolin + S-adenosyl-L-methionine = luteolin 7-methyl ether + S-adenosyl-L-homocysteine + H(+). Its pathway is flavonoid metabolism. Functionally, flavonoid 7-O-methyltransferase involved in the biosynthesis of polymethoxylated flavonoids natural products such as pebrellin, aroma compounds which contribute to the flavor of peppermint, and exhibit pharmacological activities such as anti-allergic, anti-oxidant, antibacterial, anti-proliferative, and anti-inflammatory effects. Catalyzes S-adenosylmethionine-dependent regioselective 7-O-methylation of flavonoids; active on various hydroxylated flavonoid substrates, including luteolin (LUT), quercetin, kaempferol, isorhamnetin, apigenin (API), scutellarein (6-hydroxy-apigenin, 6-OH-API, SCU), 7,8,4'-trihydroxy-flavone and naringenin (NAR), and, with a lower efficiency, 7,8,3',4'-tetrahydroxy-flavone, taxifolin and hesperetin. This Mentha piperita (Peppermint) protein is Flavonoid 7-O-methyltransferase 1B.